Reading from the N-terminus, the 361-residue chain is Deoxyribonuclease-2-beta (361 aa).

A signal peptide spans 1–27; that stretch reads MKQKMMARLLRTSFALLFLGLFGVLGA. N-linked (GlcNAc...) asparagine glycans are attached at residues Asn81, Asn103, Asn119, and Asn278.

Belongs to the DNase II family. As to expression, highly expressed in the eye lens and in salivary gland. Detected at lower levels in lung, prostate and lymph node. Isoform 2 is lung specific.

It localises to the lysosome. It catalyses the reaction Endonucleolytic cleavage to nucleoside 3'-phosphates and 3'-phosphooligonucleotide end-products.. Its function is as follows. Hydrolyzes DNA under acidic conditions. Does not require divalent cations for activity. Participates in the degradation of nuclear DNA during lens cell differentiation. The polypeptide is Deoxyribonuclease-2-beta (DNASE2B) (Homo sapiens (Human)).